We begin with the raw amino-acid sequence, 143 residues long: Glutamyl-tRNA(Gln) amidotransferase subunit C, chloroplastic/mitochondrial (143 aa).

Belongs to the GatC family. Subunit of the heterotrimeric GatCAB amidotransferase (AdT) complex, composed of A, B and C subunits.

Its subcellular location is the mitochondrion. It is found in the plastid. The protein resides in the chloroplast. The enzyme catalyses L-glutamyl-tRNA(Gln) + L-glutamine + ATP + H2O = L-glutaminyl-tRNA(Gln) + L-glutamate + ADP + phosphate + H(+). Functionally, allows the formation of correctly charged Gln-tRNA(Gln) through the transamidation of misacylated Glu-tRNA(Gln) in chloroplasts and mitochondria. The reaction takes place in the presence of glutamine and ATP through an activated gamma-phospho-Glu-tRNA(Gln). The chain is Glutamyl-tRNA(Gln) amidotransferase subunit C, chloroplastic/mitochondrial from Ricinus communis (Castor bean).